The primary structure comprises 102 residues: Gonadotropin subunit beta-1 (102 aa).

Intrachain disulfides connect Cys-8–Cys-51, Cys-20–Cys-65, Cys-31–Cys-77, Cys-35–Cys-79, and Cys-82–Cys-89. The N-linked (GlcNAc...) asparagine glycan is linked to Asn-12.

The protein belongs to the glycoprotein hormones subunit beta family. Heterodimer of an alpha and a beta chain.

Its subcellular location is the secreted. Its function is as follows. Involved in gametogenesis and steroidogenesis. The chain is Gonadotropin subunit beta-1 (cgba) from Thunnus obesus (Bigeye tuna).